We begin with the raw amino-acid sequence, 501 residues long: ATP synthase subunit alpha (501 aa).

169–176 (GDRQTGKT) contacts ATP.

This sequence belongs to the ATPase alpha/beta chains family. In terms of assembly, F-type ATPases have 2 components, CF(1) - the catalytic core - and CF(0) - the membrane proton channel. CF(1) has five subunits: alpha(3), beta(3), gamma(1), delta(1), epsilon(1). CF(0) has three main subunits: a(1), b(2) and c(9-12). The alpha and beta chains form an alternating ring which encloses part of the gamma chain. CF(1) is attached to CF(0) by a central stalk formed by the gamma and epsilon chains, while a peripheral stalk is formed by the delta and b chains.

The protein localises to the cell membrane. The catalysed reaction is ATP + H2O + 4 H(+)(in) = ADP + phosphate + 5 H(+)(out). Its function is as follows. Produces ATP from ADP in the presence of a proton gradient across the membrane. The alpha chain is a regulatory subunit. The polypeptide is ATP synthase subunit alpha (Streptococcus thermophilus (strain CNRZ 1066)).